The following is a 339-amino-acid chain: MRDHTDEKSEAAGNDDGHVRIGGLPAFDPDDPAENAVINRLVGNWHRRAAVKREEPDVYALFDPGRPDFREDMIPFRGHPIWERLSDETRSRLLSWGWVAYNRNTVLIEQRIANPAFELVIGGAYPGLGGQQLELAVAQAMVDEQYHTLMHINGSAVTRRMRRSDFSDRVLPDSHITTIHQEHLDRCEEPWQRSLTTLGFATVAEISINAYLDLLADDQEIQVVNSTTVKLHNRDEYCHASISGEMMKQVYEALPADRRRFLLEKVVAGLEAFVAPDFTTWESIVAFEGVPGWEKAAAEVREAQGGTHLVQDHSGIHTLLTEMDVLDQVEFGWGTTVTR.

The span at 1–19 (MRDHTDEKSEAAGNDDGHV) shows a compositional bias: basic and acidic residues. Positions 1 to 22 (MRDHTDEKSEAAGNDDGHVRIG) are disordered. 7 residues coordinate Fe cation: Glu-109, Glu-144, His-147, Glu-205, His-232, Glu-236, and His-239.

The protein belongs to the AurF N-oxygenase family. The cofactor is Fe(2+).

It catalyses the reaction alpha-N-dichloroacetyl-p-aminophenylserinol + AH2 + 2 O2 = chloramphenicol + A + 2 H2O. It participates in antibiotic biosynthesis. Functionally, involved in chloramphenicol biosynthesis. Catalyzes the six-electron oxidation of an aryl-amine precursor of chloramphenicol (NH2-CAM) to yield the aryl-nitro group of chloramphenicol (CAM). During catalysis, upon exposure of the diferrous cluster to O(2), ClmI forms an exceptionally long-lived peroxo intermediate (CmlI-peroxo), which reacts with NH2-CAM to form CAM. In Streptomyces venezuelae (strain ATCC 10712 / CBS 650.69 / DSM 40230 / JCM 4526 / NBRC 13096 / PD 04745), this protein is Alpha-N-dichloroacetyl-p-aminophenylserinol N-oxygenase.